Consider the following 2849-residue polypeptide: MAEEAAQNISDDQERCLQAACCLSFGGELSVSTDKSWGLHLCSCSPPGGGLWVEVYANHVLLMSDGKCGCPWCALNGKAEDRESQSPSSSASRQKNIWKTTSEAALSVVNEKTQAVVNEKTQAPLDCDNSADRIPHKPFIIIARAWSSGGPRFHHRRLCATGTADSTFSALLQLQGTTSAAAPCSLKMEASCCVLRLLCCAEDVATGLLPGTVTMETPTKVARPTQTSSQRVPLWPISHFPTSPRSSHGLPPGIPRTPSFTASQSGSEILYPPTQHPPVAILARNSDNFMNPVLNCSLEVEARAPPNLGFRVHMASGEALCLMMDFGDSSGVEMRLHNMSEAMAVTAYHQYSKGIFFHLLHFQLDMSTYKEAETQNTTLNVYLCQSENSCLEDSDPSNLGYELISAFVTKGVYMLKAVIYNEFHGTEVELGPYYVEIGHEAVSAFMNSSSVHEDEVLVFADSQVNQKSTVVIHHFPSIPSYNVSFISQTQVGDSQAWHSMTVWYKMQSVSVYTNGTVFATDTDITFTAVTKETIPLEFEWYFGEDPPVRTTSRSIKKRLSIPQWYRVMVKASNRMSSVVSEPHVIRVQKKIVANRLTSPSSALVNASVAFECWINFGTDVAYLWDFGDGTVSLGSSSSSHVYSREGEFTVEVLAFNNVSASTLRQQLFIVCEPCQPPLVKNMGPGKVQIWRSQPVRLGVTFEAAVFCDISQGLSYTWNLMDSEGLPVSLPAAVDTHRQTLILPSHTLEYGNYTALAKVQIEGSVVYSNYCVGLEVRAQAPVSVISEGTHLFFSRTTSSPIVLRGTQSFDPDDPGATLRYHWECATAGSPAHPCFDSSTAHQLDAAAPTVSFEAQWLSDSYDQFLVMLRVSSGGRNSSETRVFLSPYPDSAFRFVHISWVSFKDTFVNWNDELSLQAMCEDCSEIPNLSYSWDLFLVNATEKNRIEVPFCRVVGLLGSLGLGAISESSQLNLLPTEPGTADPDATTTPFSREPSPVTLGQPATSAPRGTPTEPMTGVYWIPPAGDSAVLGEAPEEGSLDLEPGPQSKGSLMTGRSERSQPTHSPDPHLSDFEAYYSDIQEAIPSGGRQPAKDTSFPGSGPSLSAEESPGDGDNLVDPSLSAGRAEPVLMIDWPKALLGRAVFQGYSSSGITEQTVTIKPYSLSSGETYVLQVSVASKHGLLGKAQLYLTVNPAPRDMACQVQPHHGLEAHTVFSVFCMSGKPDFHYEFSYQIGNTSKHTLYHGRDTQYYFVLPAGEHLDNYKVMVSTEITDGKGSKVQPCTVVVTVLPRYHGNDCLGEDLYNSSLKNLSTLQLMGSYTEIRNYITVITRILSRLSKEDKTASCNQWSRIQDALISSVCRLAFVDQEEMIGSVLMLRDLVSFSNKLGFMSAVLILKYTRALLAQGQFSGPFVIDKGVRLELIGLISRVWEVSEQENSKEEVYRHEEGITVISDLLLGCLSLNHVSTGQMEFRTLLHYNLQSSVQSLGSVQVHLPGDLAGHSPAGAETQSPCYISQLILFKKNPYPGSQAPGQIGGVVGLNLYTCSSRRPINRQWLRKPVMVEFGEEDGLDNRRNKTTFVLLRDKVNLHQFTELSENPQESLQIEIEFSKPVTRAFPVMLLVRFSEKPTPSDFLVKQIYFWDESIVQIYIPAASQKDASVGYLSLLDADYDRKPPNRYLAKAVNYTVHFQWIRCLFWDKREWKSERFSPQPGTSPEKVNCSYHRLAAFALLRRKLKASFEVSDISKLQSHPENLLPSIFIMGSVILYGFLVAKSRQVDHHEKKKAGYIFLQEASLPGHQLYAVVIDTGFRAPARLTSKVYIVLCGDNGLSETKELSCPEKPLFERNSRHTFILSAPAQLGLLRKIRLWHDSRGPSPGWFISHVMVKELHTGQGWFFPAQCWLSAGRHDGRVERELTCLQGGLGFRKLFYCKFTEYLEDFHVWLSVYSRPSSSRYLHTPRLTVSFSLLCVYACLTALVAAGGQEQPHLDVSPTLGSFRVGLLCTLLASPGAQLLSLLFRLSKEAPGSARVEPHSPLRGGAQTEAPHGPNSWGRIPDAQEPRKQPASAILSGSGRAQRKAASDNGTACPAPKLQVHGADHSRTSLMGKSHCCPPHTQAPSSGLEGLMPQWSRALQPWWSSAVWAICGTASLACSLGTGFLAYRFGQEQCVQWLHLLSLSVVCCIFITQPLMVCLMALGFAWKRRADNHFFTESLCEATRDLDSELAERSWTRLPFSSSCSIPDCAGEVEKVLAARQQARHLRWAHPPSKAQLRGTRQRMRRESRTRAALRDISMDILMLLLLLCVIYGRFSQDEYSLNQAIRKEFTRNARNCLGGLRNIADWWDWSLTTLLDGLYPGGTPSARVPGAQPGALGGKCYLIGSSVIRQLKVFPRHLCKPPRPFSALIEDSIPTCSPEVGGPENPYLIDPENQNVTLNGPGGCGTREDCVLSLGRTRTEAHTALSRLRASMWIDRSTRAVSVHFTLYNPPTQLFTSVSLRVEILPTGSLVPSSLVESFSIFRSDSALQYHLMLPQLVFLALSLIHLCVQLYRMMDKGVLSYWRKPRNWLELSVVGVSLTYYAVSGHLVTLAGDVTNQFHRGLCRAFMDLTLMASWNQRARWLRGILLFLFTLKCVYLPGIQNTMASCSSMMRHSLPSIFVAGLVGALMLAALSHLHRFLLSMWVLPPGTFTDAFPGLLFHFPRRSQKDCLLGLSKSDQRAMACYFGILLIVSATLCFGMLRGFLMTLPQKRKSFQSKSFVRLKDVTAYMWEKVLTFLRLETPKLEEAEMVENHNYYLDEFANLLDELLMKINGLSDSLQLPLLEKTSNNTGEARTEESPLVDISSYQAAEPADIKDF.

Residues 1 to 1748 (MAEEAAQNIS…SDISKLQSHP (1748 aa)) lie on the Extracellular side of the membrane. Residues asparagine 8, asparagine 295, asparagine 338, asparagine 376, asparagine 447, asparagine 482, asparagine 514, asparagine 605, asparagine 657, asparagine 751, asparagine 875, asparagine 926, and asparagine 937 are each glycosylated (N-linked (GlcNAc...) asparagine). 2 consecutive PKD domains span residues 508-590 (SVSV…VQKK) and 592-673 (VANR…VCEP). In terms of domain architecture, REJ spans 674–1571 (CQPPLVKNMG…GEEDGLDNRR (898 aa)). The span at 970–987 (NLLPTEPGTADPDATTTP) shows a compositional bias: low complexity. Disordered stretches follow at residues 970 to 1068 (NLLP…PHLS) and 1081 to 1118 (IPSG…DPSL). A compositionally biased stretch (basic and acidic residues) spans 1053–1068 (RSERSQPTHSPDPHLS). N-linked (GlcNAc...) asparagine glycans are attached at residues asparagine 1233, asparagine 1301, asparagine 1306, asparagine 1572, asparagine 1681, and asparagine 1716. Positions 1587 to 1735 (QFTELSENPQ…ALLRRKLKAS (149 aa)) constitute a GAIN-B domain. Cysteine 1691 and cysteine 1717 are joined by a disulfide. A GPS region spans residues 1691–1735 (CLFWDKREWKSERFSPQPGTSPEKVNCSYHRLAAFALLRRKLKAS). Residues 1749–1769 (ENLLPSIFIMGSVILYGFLVA) form a helical membrane-spanning segment. Residues 1770 to 1956 (KSRQVDHHEK…SSSRYLHTPR (187 aa)) lie on the Cytoplasmic side of the membrane. The region spanning 1796–1913 (QLYAVVIDTG…HDGRVERELT (118 aa)) is the PLAT domain. The chain crosses the membrane as a helical span at residues 1957 to 1977 (LTVSFSLLCVYACLTALVAAG). Over 1978–1992 (GQEQPHLDVSPTLGS) the chain is Extracellular. A helical membrane pass occupies residues 1993–2013 (FRVGLLCTLLASPGAQLLSLL). Over 2014–2135 (FRLSKEAPGS…SRALQPWWSS (122 aa)) the chain is Cytoplasmic. Residues 2023–2089 (SARVEPHSPL…GTACPAPKLQ (67 aa)) are disordered. Residues 2136–2156 (AVWAICGTASLACSLGTGFLA) traverse the membrane as a helical segment. The Extracellular segment spans residues 2157–2174 (YRFGQEQCVQWLHLLSLS). A helical membrane pass occupies residues 2175–2195 (VVCCIFITQPLMVCLMALGFA). The Cytoplasmic segment spans residues 2196-2281 (WKRRADNHFF…QRMRRESRTR (86 aa)). A helical transmembrane segment spans residues 2282-2302 (AALRDISMDILMLLLLLCVIY). The Extracellular segment spans residues 2303-2522 (GRFSQDEYSL…FRSDSALQYH (220 aa)). Asparagine 2426 carries an N-linked (GlcNAc...) asparagine glycan. The chain crosses the membrane as a helical span at residues 2523 to 2543 (LMLPQLVFLALSLIHLCVQLY). The Cytoplasmic portion of the chain corresponds to 2544–2562 (RMMDKGVLSYWRKPRNWLE). A helical membrane pass occupies residues 2563 to 2583 (LSVVGVSLTYYAVSGHLVTLA). Topologically, residues 2584-2616 (GDVTNQFHRGLCRAFMDLTLMASWNQRARWLRG) are extracellular. A helical membrane pass occupies residues 2617–2637 (ILLFLFTLKCVYLPGIQNTMA). The Cytoplasmic segment spans residues 2638–2646 (SCSSMMRHS). Residues 2647-2667 (LPSIFVAGLVGALMLAALSHL) traverse the membrane as a helical segment. Residues 2668–2711 (HRFLLSMWVLPPGTFTDAFPGLLFHFPRRSQKDCLLGLSKSDQR) are Extracellular-facing. Residues 2712-2732 (AMACYFGILLIVSATLCFGML) form a helical membrane-spanning segment. Topologically, residues 2733 to 2849 (RGFLMTLPQK…AAEPADIKDF (117 aa)) are cytoplasmic.

It belongs to the polycystin family. As to quaternary structure, heterodimer. Interacts with PKD2 to form a calcium channel. Interacts with PKD2L1; to form ciliary calcium channel. May interact with GNA12, GNAS, GNAI1 and GNAI2. As to expression, detected in testis and in fetal and adult heart.

Its subcellular location is the cell projection. The protein resides in the cilium membrane. Component of a calcium-permeant ion channel formed by PKD1L2 and PKD1L1 in primary cilia, where it controls cilium calcium concentration, without affecting cytoplasmic calcium concentration, and regulates sonic hedgehog/SHH signaling and GLI2 transcription. The PKD1L1:PKD2L1 channel complex is mechanosensitive only at high pressures and is highly temperature sensitive. Also involved in left/right axis specification downstream of nodal flow by forming a complex with PKD2 in cilia to facilitate flow detection in left/right patterning. May function as a G-protein-coupled receptor. In Homo sapiens (Human), this protein is Polycystin-1-like protein 1.